We begin with the raw amino-acid sequence, 227 residues long: uncharacterized protein (227 aa).

The next 2 membrane-spanning stretches (helical) occupy residues 12 to 32 (IVLF…YLYA) and 80 to 100 (IILI…KIPL).

The protein localises to the cell membrane. This is an uncharacterized protein from Methanocaldococcus jannaschii (strain ATCC 43067 / DSM 2661 / JAL-1 / JCM 10045 / NBRC 100440) (Methanococcus jannaschii).